Reading from the N-terminus, the 187-residue chain is MVAAARVVSGVKAEGLLRGACAALAAAAALLLGLSTQTETVLLVRKKGTVKDVQALWVLAMAAASAAGYHLLQLLKCLYLGRGGGRALAWTCLLLDKACAYATFATTVAAAQACVVALDGAHALQWTKLCNIYTRFCEQVAGSLVLGMLAAVGTAVLSAASARNVFRHYYCSSHSPPAPPPETCDAH.

Topologically, residues 1–14 are cytoplasmic; sequence MVAAARVVSGVKAE. The chain crosses the membrane as a helical span at residues 15-35; that stretch reads GLLRGACAALAAAAALLLGLS. The Extracellular portion of the chain corresponds to 36-54; that stretch reads TQTETVLLVRKKGTVKDVQ. A helical transmembrane segment spans residues 55 to 75; it reads ALWVLAMAAASAAGYHLLQLL. At 76-97 the chain is on the cytoplasmic side; it reads KCLYLGRGGGRALAWTCLLLDK. The chain crosses the membrane as a helical span at residues 98-118; sequence ACAYATFATTVAAAQACVVAL. Residues 119–139 are Extracellular-facing; the sequence is DGAHALQWTKLCNIYTRFCEQ. The helical transmembrane segment at 140 to 160 threads the bilayer; the sequence is VAGSLVLGMLAAVGTAVLSAA. The Cytoplasmic segment spans residues 161-187; the sequence is SARNVFRHYYCSSHSPPAPPPETCDAH.

The protein belongs to the Casparian strip membrane proteins (CASP) family. In terms of assembly, homodimer and heterodimers.

It is found in the cell membrane. The protein is CASP-like protein 2C1 of Zea mays (Maize).